Reading from the N-terminus, the 407-residue chain is MTVRGAALAPDPASPTTAAASPSISVIPEGSPTAMEQPVFLMTTAAQAISGFFVWTALLITCHQIYMHLRCYSCPNEQRYIVRILFIVPIYAFDSWLSLLFFTNDQYYVYFGTVRDCYEALVIYNFLSLCYEYLGGESSIMSEIRGKPIESSCMYGTCCLWGKTYSIGFLRFCKQATLQFCVVKPLMAVSTVVLQAFGKYRDGDFDVTSGYLYVTIIYNISVSLALYALFLFYFATRELLSPYSPVLKFFMVKSVIFLSFWQGMLLAILEKCGAIPKIHSARVSVGEGTVAAGYQDFIICVEMFFAALALRHAFTYKVYADKRVDAQGRCAPMKSISSSLKETMNPHDIVQDAIHNFSPAYQQYTQQSTLEPGPTWRGGAHGLSRSHSLSGARDNEKTLLLSSDDEF.

Residues 1 to 24 (MTVRGAALAPDPASPTTAAASPSI) are disordered. Helical transmembrane passes span 40–60 (FLMT…ALLI), 84–104 (ILFI…FFTN), 121–141 (LVIY…SSIM), 178–198 (LQFC…QAFG), 214–234 (VTII…LFYF), 249–269 (FFMV…LAIL), and 290–310 (VAAG…ALAL). A disordered region spans residues 369–395 (TLEPGPTWRGGAHGLSRSHSLSGARDN). Phosphoserine is present on residues S388, S402, and S403.

The protein belongs to the TMEM184 family.

The protein localises to the membrane. In terms of biological role, may activate the MAP kinase signaling pathway. The chain is Transmembrane protein 184B (TMEM184B) from Bos taurus (Bovine).